A 267-amino-acid polypeptide reads, in one-letter code: MSVRVAIAGVSGRMGRALLEAVAADDGCALYAALDRPGSSLVGQDAGAAWGAANGVTVTDQAQAALKGAQVLVDFTRPEATFGYLEACALDGVPVVIGTTGFDEAGRARIAAAAERVPVVFAPNMSVGVNLLMKLAEVAAEVLQDGYDIEIIEAHHRHKVDAPSGTALGLGQAVARASGRDLEACAVYGREGVTGERDPRTIGFATVRGGDIVGDHTLLFAGVGERVELTHKASSRATFAQGALRAAKWVQGRAPGLYDMRDVLGLK.

NAD(+)-binding positions include glycine 9–methionine 14 and aspartate 35. Arginine 36 contacts NADP(+). Residues glycine 98–threonine 100 and alanine 122–methionine 125 contribute to the NAD(+) site. Histidine 155 (proton donor/acceptor) is an active-site residue. Residue histidine 156 coordinates (S)-2,3,4,5-tetrahydrodipicolinate. Residue lysine 159 is the Proton donor of the active site. Glycine 165–threonine 166 contributes to the (S)-2,3,4,5-tetrahydrodipicolinate binding site.

This sequence belongs to the DapB family.

It localises to the cytoplasm. It carries out the reaction (S)-2,3,4,5-tetrahydrodipicolinate + NAD(+) + H2O = (2S,4S)-4-hydroxy-2,3,4,5-tetrahydrodipicolinate + NADH + H(+). It catalyses the reaction (S)-2,3,4,5-tetrahydrodipicolinate + NADP(+) + H2O = (2S,4S)-4-hydroxy-2,3,4,5-tetrahydrodipicolinate + NADPH + H(+). Its pathway is amino-acid biosynthesis; L-lysine biosynthesis via DAP pathway; (S)-tetrahydrodipicolinate from L-aspartate: step 4/4. In terms of biological role, catalyzes the conversion of 4-hydroxy-tetrahydrodipicolinate (HTPA) to tetrahydrodipicolinate. The polypeptide is 4-hydroxy-tetrahydrodipicolinate reductase (Thiobacillus denitrificans (strain ATCC 25259 / T1)).